The following is a 95-amino-acid chain: Small ribosomal subunit protein uS14 (95 aa).

The protein belongs to the universal ribosomal protein uS14 family. As to quaternary structure, part of the 30S ribosomal subunit. Contacts proteins S3 and S10.

Binds 16S rRNA, required for the assembly of 30S particles and may also be responsible for determining the conformation of the 16S rRNA at the A site. The protein is Small ribosomal subunit protein uS14 of Fusobacterium nucleatum subsp. nucleatum (strain ATCC 25586 / DSM 15643 / BCRC 10681 / CIP 101130 / JCM 8532 / KCTC 2640 / LMG 13131 / VPI 4355).